We begin with the raw amino-acid sequence, 3101 residues long: Probable polyketide synthase 32 (3101 aa).

A Ketosynthase family 3 (KS3) domain is found at 27–465 (SGDVAVIGIG…GSNVCLILSE (439 aa)). Active-site for beta-ketoacyl synthase activity residues include Cys-199, His-338, and His-388. An acyl/malonyl transferase region spans residues 664 to 697 (GVSADIIIGHSLGEVSSAYCSGMIDFETLCYLTY). Ser-674 serves as the catalytic For acyl/malonyl transferase activity. An N-terminal hotdog fold region spans residues 965 to 1087 (GPSINNLGNN…GNFSLTKHNS (123 aa)). A PKS/mFAS DH domain is found at 965–1287 (GPSINNLGNN…CTLVSLPNPE (323 aa)). Residue His-999 is the Proton acceptor; for dehydratase activity of the active site. The tract at residues 1104 to 1287 (NFTSISKQDL…CTLVSLPNPE (184 aa)) is C-terminal hotdog fold. Asp-1176 (proton donor; for dehydratase activity) is an active-site residue. The interval 1209 to 1236 (KNGNNNDDDEESNNNNNNNNNNNNNNNN) is disordered. A compositionally biased stretch (low complexity) spans 1221–1236 (NNNNNNNNNNNNNNNN). The Carrier domain occupies 2550-2627 (DNNEIIRSTI…QSIEIIKSAN (78 aa)). O-(pantetheine 4'-phosphoryl)serine is present on Ser-2587. Residues 2627–2648 (NNKNNKNNNNNNNNKTNKNNNN) form a disordered region.

It depends on pantetheine 4'-phosphate as a cofactor.

Probable polyketide synthase. In Dictyostelium discoideum (Social amoeba), this protein is Probable polyketide synthase 32 (pks32).